The primary structure comprises 351 residues: Probable dual-specificity RNA methyltransferase RlmN (351 aa).

The active-site Proton acceptor is the E92. One can recognise a Radical SAM core domain in the interval 98-332 (TDQRLTVCIS…VSLRASRGLD (235 aa)). C105 and C337 are oxidised to a cystine. C112, C116, and C119 together coordinate [4Fe-4S] cluster. Residues 159-160 (GE), S189, 218-220 (SLH), and N294 each bind S-adenosyl-L-methionine. The active-site S-methylcysteine intermediate is the C337.

This sequence belongs to the radical SAM superfamily. RlmN family. [4Fe-4S] cluster serves as cofactor.

The protein localises to the cytoplasm. It carries out the reaction adenosine(2503) in 23S rRNA + 2 reduced [2Fe-2S]-[ferredoxin] + 2 S-adenosyl-L-methionine = 2-methyladenosine(2503) in 23S rRNA + 5'-deoxyadenosine + L-methionine + 2 oxidized [2Fe-2S]-[ferredoxin] + S-adenosyl-L-homocysteine. The catalysed reaction is adenosine(37) in tRNA + 2 reduced [2Fe-2S]-[ferredoxin] + 2 S-adenosyl-L-methionine = 2-methyladenosine(37) in tRNA + 5'-deoxyadenosine + L-methionine + 2 oxidized [2Fe-2S]-[ferredoxin] + S-adenosyl-L-homocysteine. Functionally, specifically methylates position 2 of adenine 2503 in 23S rRNA and position 2 of adenine 37 in tRNAs. The chain is Probable dual-specificity RNA methyltransferase RlmN from Synechococcus sp. (strain CC9902).